The sequence spans 250 residues: Pyrroloquinoline-quinone synthase (250 aa).

Belongs to the PqqC family.

The enzyme catalyses 6-(2-amino-2-carboxyethyl)-7,8-dioxo-1,2,3,4,7,8-hexahydroquinoline-2,4-dicarboxylate + 3 O2 = pyrroloquinoline quinone + 2 H2O2 + 2 H2O + H(+). It functions in the pathway cofactor biosynthesis; pyrroloquinoline quinone biosynthesis. In terms of biological role, ring cyclization and eight-electron oxidation of 3a-(2-amino-2-carboxyethyl)-4,5-dioxo-4,5,6,7,8,9-hexahydroquinoline-7,9-dicarboxylic-acid to PQQ. The polypeptide is Pyrroloquinoline-quinone synthase (Xanthomonas oryzae pv. oryzae (strain KACC10331 / KXO85)).